The sequence spans 336 residues: tRNA N6-adenosine threonylcarbamoyltransferase (336 aa).

2 residues coordinate Fe cation: His114 and His118. Substrate is bound by residues 136–140, Asp169, Gly182, Asp186, and Asn275; that span reads LVSGG. Asp301 is a binding site for Fe cation.

This sequence belongs to the KAE1 / TsaD family. The cofactor is Fe(2+).

It is found in the cytoplasm. It catalyses the reaction L-threonylcarbamoyladenylate + adenosine(37) in tRNA = N(6)-L-threonylcarbamoyladenosine(37) in tRNA + AMP + H(+). Functionally, required for the formation of a threonylcarbamoyl group on adenosine at position 37 (t(6)A37) in tRNAs that read codons beginning with adenine. Is involved in the transfer of the threonylcarbamoyl moiety of threonylcarbamoyl-AMP (TC-AMP) to the N6 group of A37, together with TsaE and TsaB. TsaD likely plays a direct catalytic role in this reaction. The protein is tRNA N6-adenosine threonylcarbamoyltransferase of Streptococcus pneumoniae (strain JJA).